The following is a 758-amino-acid chain: MTTINHTLGFPRIGLKRELKKAQENYWAGKISQQELLETGRELRARHWEQQKQAGVDLVPVGDFAWYDHVLTTSLLLGNVPPRHQNPDGTIDLDTLFRIARGRAPTGEPAAAAEMTKWFNTNYHYIVPEFQQGQEFKLSWTQLLEEVDEALSLGHQVKPVLLGPITYLWLGKVKGQVFDRLSLLQDILPVYQQVLAELAKRGIEWVQIDEPALVLELPAEWLTAYPIAYQALQGQVKLLLTTYFDSIGHNLETIKSLPVQGLHVDLVAGQDDIAQLHESLPKEWVLSLGVINGRNVWRADLTAKHQLIKPLVGSRTLWIGSSCSLLHSPIDLSDETALDAEVKSWFAFALQKCEELALLTAALNQPDGSKQAELDAYSAPIRARRESKRVNNQAVTERLAAINPQDSERNQPYLQRAEIQRQRYNLPLWPTTTIGSFPQTTEIRGLRLDFKKGRVDGTSYRTNICEHIKQAINEQERLGLDVLVHGEAERNDMVEYFGEHLDGFVFTQNGWVQSYGSRCVKPPVIIGDVSRPEAITVEWAKYAQSLTEKPVKGMLTGPVTILCWSFPREDVSRETIAKQIALALRDEVDDLQEAGIGIIQIDEPALREGLPLRREEWQSYLDWAVEAFKLNAAIAKDDTQIHTHMCYCEFNDIMPSIAALDADVITIETSRSDMELLDSFENFSYPNEIGPGVYDIHSPNVPSVEWIEALLRKAADRIPVERLWVNPDCGLKTRGWTETRQSLANMVQAAKRLRESVK.

5-methyltetrahydropteroyltri-L-glutamate is bound by residues 17-20 (RELK) and Lys117. L-homocysteine contacts are provided by residues 434–436 (IGS) and Glu487. Residues 434–436 (IGS) and Glu487 contribute to the L-methionine site. Residues 518 to 519 (RC) and Trp564 contribute to the 5-methyltetrahydropteroyltri-L-glutamate site. Asp602 serves as a coordination point for L-homocysteine. Asp602 lines the L-methionine pocket. Glu608 is a binding site for 5-methyltetrahydropteroyltri-L-glutamate. Residues His644, Cys646, and Glu668 each contribute to the Zn(2+) site. His697 (proton donor) is an active-site residue. Cys729 is a Zn(2+) binding site.

Belongs to the vitamin-B12 independent methionine synthase family. The cofactor is Zn(2+).

It carries out the reaction 5-methyltetrahydropteroyltri-L-glutamate + L-homocysteine = tetrahydropteroyltri-L-glutamate + L-methionine. Its pathway is amino-acid biosynthesis; L-methionine biosynthesis via de novo pathway; L-methionine from L-homocysteine (MetE route): step 1/1. Catalyzes the transfer of a methyl group from 5-methyltetrahydrofolate to homocysteine resulting in methionine formation. This Photorhabdus laumondii subsp. laumondii (strain DSM 15139 / CIP 105565 / TT01) (Photorhabdus luminescens subsp. laumondii) protein is 5-methyltetrahydropteroyltriglutamate--homocysteine methyltransferase.